The sequence spans 344 residues: Chalcone synthase A (344 aa).

Residue cysteine 167 is part of the active site.

Belongs to the thiolase-like superfamily. Chalcone/stilbene synthases family.

It carries out the reaction (E)-4-coumaroyl-CoA + 3 malonyl-CoA + 3 H(+) = 2',4,4',6'-tetrahydroxychalcone + 3 CO2 + 4 CoA. It functions in the pathway secondary metabolite biosynthesis; flavonoid biosynthesis. In terms of biological role, the primary product of this enzyme is 4,2',4',6'-tetrahydroxychalcone (also termed naringenin-chalcone or chalcone) which can under specific conditions spontaneously isomerize into naringenin. This is Chalcone synthase A (CHSA) from Ipomoea nil (Japanese morning glory).